Consider the following 255-residue polypeptide: MAHIARKRFGQHFLSDGGIIDAIVQEIAPQPGDAMVEIGPGLAALTQPLVERLGRLTVIELDRDLAKRLREHPQLEVIESDVLKVDFAALATRFAAPLRVVGNLPYNISTPILFHLLGFAHLIADQHFMLQKEVIDRMVARPATSDYSRLSVMLQWRYRMENVLFVPPESFDPPPRVDSAVVRMVPLAEPPAVDAARLGEIVQVAFSQRRKIMRHTLGKWLDEHGFAGQFDAQRRAEEVPVAEYVALAQAVPPRP.

6 residues coordinate S-adenosyl-L-methionine: His12, Leu14, Gly39, Glu60, Asp81, and Asn103.

The protein belongs to the class I-like SAM-binding methyltransferase superfamily. rRNA adenine N(6)-methyltransferase family. RsmA subfamily.

It is found in the cytoplasm. The enzyme catalyses adenosine(1518)/adenosine(1519) in 16S rRNA + 4 S-adenosyl-L-methionine = N(6)-dimethyladenosine(1518)/N(6)-dimethyladenosine(1519) in 16S rRNA + 4 S-adenosyl-L-homocysteine + 4 H(+). Specifically dimethylates two adjacent adenosines (A1518 and A1519) in the loop of a conserved hairpin near the 3'-end of 16S rRNA in the 30S particle. May play a critical role in biogenesis of 30S subunits. The polypeptide is Ribosomal RNA small subunit methyltransferase A (Variovorax paradoxus (strain S110)).